The following is a 260-amino-acid chain: Cytochrome c1-2, heme protein, mitochondrial (260 aa).

A mitochondrion-targeting transit peptide spans 1-17; it reads IGAGVSGLLGFATVASA. Residues 18-221 lie on the Mitochondrial intermembrane side of the membrane; sequence DEAEHGLECP…AAEPEMEERK (204 aa). The Cytochrome c domain maps to 43–150; the sequence is ASIRRGHQVY…NGQNYVFALL (108 aa). Residues Cys-56, Cys-59, His-60, and Met-179 each contribute to the heme c site. A helical transmembrane segment spans residues 222–241; that stretch reads LMGFKWIFVLSLALLQAAYY. The Mitochondrial matrix segment spans residues 242–260; it reads RRLRWSVLKSRKLVLDVVN.

This sequence belongs to the cytochrome c family. Component of the ubiquinol-cytochrome c oxidoreductase (cytochrome b-c1 complex, complex III, CIII), a multisubunit enzyme composed of 3 respiratory subunits cytochrome b, cytochrome c1 and Rieske protein, 2 core protein subunits, and additional low-molecular weight protein subunits. The complex exists as an obligatory dimer and forms supercomplexes (SCs) in the inner mitochondrial membrane with cytochrome c oxidase (complex IV, CIV). Heme c serves as cofactor. In terms of tissue distribution, in all tissues analyzed.

The protein resides in the mitochondrion inner membrane. The enzyme catalyses a quinol + 2 Fe(III)-[cytochrome c](out) = a quinone + 2 Fe(II)-[cytochrome c](out) + 2 H(+)(out). Its function is as follows. Component of the ubiquinol-cytochrome c oxidoreductase, a multisubunit transmembrane complex that is part of the mitochondrial electron transport chain which drives oxidative phosphorylation. The respiratory chain contains 3 multisubunit complexes succinate dehydrogenase (complex II, CII), ubiquinol-cytochrome c oxidoreductase (cytochrome b-c1 complex, complex III, CIII) and cytochrome c oxidase (complex IV, CIV), that cooperate to transfer electrons derived from NADH and succinate to molecular oxygen, creating an electrochemical gradient over the inner membrane that drives transmembrane transport and the ATP synthase. The cytochrome b-c1 complex catalyzes electron transfer from ubiquinol to cytochrome c, linking this redox reaction to translocation of protons across the mitochondrial inner membrane, with protons being carried across the membrane as hydrogens on the quinol. In the process called Q cycle, 2 protons are consumed from the matrix, 4 protons are released into the intermembrane space and 2 electrons are passed to cytochrome c. Cytochrome c1 is a catalytic core subunit containing a c-type heme. It transfers electrons from the [2Fe-2S] iron-sulfur cluster of the Rieske protein to cytochrome c. The protein is Cytochrome c1-2, heme protein, mitochondrial (CYCL) of Solanum tuberosum (Potato).